Reading from the N-terminus, the 499-residue chain is Potassium voltage-gated channel subfamily A member 2 (499 aa).

The tract at residues Met1–Pro27 is disordered. The tract at residues Met1–Ile125 is tetramerization domain. Residues Met1–Gly160 lie on the Cytoplasmic side of the membrane. The helical transmembrane segment at Pro161 to Leu182 threads the bilayer. At Glu183 to Pro221 the chain is on the extracellular side. N-linked (GlcNAc...) asparagine glycosylation is present at Asn207. A helical transmembrane segment spans residues Phe222–Ala243. Cys244 carries S-palmitoyl cysteine lipidation. The Cytoplasmic segment spans residues Cys244 to Leu254. A helical transmembrane segment spans residues Met255–Ala275. Over Glu276–Ser289 the chain is Extracellular. The helical; Voltage-sensor transmembrane segment at Leu290 to His310 threads the bilayer. The Cytoplasmic segment spans residues Ser311 to Met325. Residues Lys312–Met325 are S4-S5 linker. The helical transmembrane segment at Arg326–Phe347 threads the bilayer. The Extracellular portion of the chain corresponds to Phe348 to Ile361. Residues Pro362–Thr373 constitute an intramembrane region (helical). Residues Thr374–Asp379 carry the Selectivity filter motif. An intramembrane segment occupies Thr374 to Val381. At Pro382–Lys388 the chain is on the extracellular side. Residues Ile389–Tyr417 form a helical membrane-spanning segment. Over His418–Val499 the chain is Cytoplasmic. The PDZ-binding signature appears at Thr497–Val499.

Belongs to the potassium channel family. A (Shaker) (TC 1.A.1.2) subfamily. Kv1.2/KCNA2 sub-subfamily. As to quaternary structure, homotetramer and heterotetramer with other family members. Detected in tadpole brain and spinal cord.

It localises to the cell membrane. It carries out the reaction K(+)(in) = K(+)(out). In terms of biological role, voltage-gated potassium channel that mediates transmembrane potassium transport in excitable membranes, primarily in the brain and central nervous system. Prevents aberrant action potential firing and regulates neuronal output. Forms tetrameric potassium-selective channels through which potassium ions pass in accordance with their electrochemical gradient. The channel alternates between opened and closed conformations in response to the voltage difference across the membrane. Can form functional homotetrameric channels and heterotetrameric channels with other family members; the channels characteristics depend critically on the types of channel-forming alpha subunits that are present. Channel properties are modulated by cytoplasmic beta subunits that regulate the subcellular location of the alpha subunits. In vivo, membranes probably contain a mixture of heteromeric potassium channel complexes, making it difficult to assign currents observed in intact tissues to any particular potassium channel family member. Homotetrameric KCNA2 forms a delayed-rectifier potassium channel that opens in response to membrane depolarization, followed by slow spontaneous channel closure. Regulates neuronal excitability and plays a role as pacemaker in the regulation of neuronal action potentials. KCNA2-containing channels play a presynaptic role and prevent hyperexcitability and aberrant action potential firing. Response to toxins that are selective for KCNA2-containing potassium channels suggests that in Purkinje cells, dendritic subthreshold KCNA2-containing potassium channels prevent random spontaneous calcium spikes, suppressing dendritic hyperexcitability without hindering the generation of somatic action potentials, and thereby play an important role in motor coordination. Plays a role in the induction of long-term potentiation of neuron excitability in the CA3 layer of the hippocampus. The sequence is that of Potassium voltage-gated channel subfamily A member 2 (kcna2) from Xenopus laevis (African clawed frog).